The chain runs to 738 residues: 1,4-alpha-glucan branching enzyme GlgB (738 aa).

Catalysis depends on Asp-417, which acts as the Nucleophile. Glu-472 acts as the Proton donor in catalysis.

Belongs to the glycosyl hydrolase 13 family. GlgB subfamily. In terms of assembly, monomer.

The catalysed reaction is Transfers a segment of a (1-&gt;4)-alpha-D-glucan chain to a primary hydroxy group in a similar glucan chain.. It functions in the pathway glycan biosynthesis; glycogen biosynthesis. Functionally, catalyzes the formation of the alpha-1,6-glucosidic linkages in glycogen by scission of a 1,4-alpha-linked oligosaccharide from growing alpha-1,4-glucan chains and the subsequent attachment of the oligosaccharide to the alpha-1,6 position. The sequence is that of 1,4-alpha-glucan branching enzyme GlgB from Burkholderia pseudomallei (strain 1106a).